The chain runs to 492 residues: Bifunctional purine biosynthesis protein PurH (492 aa).

The MGS-like domain occupies 1–144; it reads MKKAILSVSN…KNYKHVTTIV (144 aa).

The protein belongs to the PurH family.

It carries out the reaction (6R)-10-formyltetrahydrofolate + 5-amino-1-(5-phospho-beta-D-ribosyl)imidazole-4-carboxamide = 5-formamido-1-(5-phospho-D-ribosyl)imidazole-4-carboxamide + (6S)-5,6,7,8-tetrahydrofolate. The enzyme catalyses IMP + H2O = 5-formamido-1-(5-phospho-D-ribosyl)imidazole-4-carboxamide. The protein operates within purine metabolism; IMP biosynthesis via de novo pathway; 5-formamido-1-(5-phospho-D-ribosyl)imidazole-4-carboxamide from 5-amino-1-(5-phospho-D-ribosyl)imidazole-4-carboxamide (10-formyl THF route): step 1/1. It participates in purine metabolism; IMP biosynthesis via de novo pathway; IMP from 5-formamido-1-(5-phospho-D-ribosyl)imidazole-4-carboxamide: step 1/1. This chain is Bifunctional purine biosynthesis protein PurH, found in Staphylococcus aureus (strain MSSA476).